We begin with the raw amino-acid sequence, 956 residues long: Thrombospondin-3 (956 aa).

The N-terminal stretch at 1–22 is a signal peptide; it reads METQELRGALALLLLCFFTSAS. The 171-residue stretch at 23–193 folds into the Laminin G-like domain; sequence QDLQVIDLLT…VESMKIILGG (171 aa). 21 disulfide bridges follow: Cys278–Cys289, Cys283–Cys300, Cys303–Cys314, Cys320–Cys332, Cys326–Cys341, Cys344–Cys368, Cys374–Cys388, Cys382–Cys397, Cys400–Cys412, Cys418–Cys432, Cys426–Cys442, Cys444–Cys455, Cys471–Cys478, Cys483–Cys503, Cys519–Cys539, Cys542–Cys562, Cys578–Cys598, Cys601–Cys621, Cys639–Cys659, Cys679–Cys699, and Cys715–Cys936. A glycan (N-linked (GlcNAc...) asparagine) is linked at Asn310. Residues 316–354 enclose the EGF-like 1; calcium-binding domain; the sequence is DINECAHADPCFPGSSCINTMPGFHCEACPRGYKGTQVS. Residues 370–410 enclose the EGF-like 2; calcium-binding domain; sequence DIDECNDGNNGGCDPNSICTNTVGSFKCGPCRLGFLGNQSQ. Asn407 carries an N-linked (GlcNAc...) asparagine glycan. The 43-residue stretch at 414-456 folds into the EGF-like 3 domain; that stretch reads PARTCHSPAHSPCHIHAHCLFERNGAVSCQCNVGWAGNGNVCG. 8 TSP type-3 repeats span residues 457-491, 492-527, 528-550, 551-586, 587-609, 610-647, 648-687, and 688-723; these read TDTD…NSGQ, EDAD…NKDQ, QNSD…NNDQ, KDTD…NPLQ, TDRD…NPTQ, TDAD…NSSQ, LDSD…NPNQ, and KDSD…EVTL. Disordered regions lie at residues 518 to 537 and 546 to 702; these read NCRL…SFGD and PNND…CEDD. Residues 555–568 are compositionally biased toward acidic residues; that stretch reads GNGEGDACDNDVDG. The segment covering 612–628 has biased composition (acidic residues); it reads ADSDLVGDVCDTNEDSD. A glycan (N-linked (GlcNAc...) asparagine) is linked at Asn644. Residues 650–667 show a composition bias toward acidic residues; that stretch reads SDNDGLGDECDGDDDNDG. The TSP C-terminal domain maps to 727–941; it reads RAYQTVVLDP…LQYRCNDTVP (215 aa). Residue Asn937 is glycosylated (N-linked (GlcNAc...) asparagine).

Belongs to the thrombospondin family. In terms of assembly, oligomer; disulfide-linked.

Its function is as follows. Adhesive glycoprotein that mediates cell-to-cell and cell-to-matrix interactions. Can bind to fibrinogen, fibronectin, laminin and type V collagen. This is Thrombospondin-3 (THBS3) from Homo sapiens (Human).